Here is a 265-residue protein sequence, read N- to C-terminus: Imidazole glycerol phosphate synthase subunit HisF (265 aa).

Active-site residues include aspartate 17 and aspartate 136.

Belongs to the HisA/HisF family. As to quaternary structure, heterodimer of HisH and HisF.

The protein resides in the cytoplasm. It catalyses the reaction 5-[(5-phospho-1-deoxy-D-ribulos-1-ylimino)methylamino]-1-(5-phospho-beta-D-ribosyl)imidazole-4-carboxamide + L-glutamine = D-erythro-1-(imidazol-4-yl)glycerol 3-phosphate + 5-amino-1-(5-phospho-beta-D-ribosyl)imidazole-4-carboxamide + L-glutamate + H(+). It functions in the pathway amino-acid biosynthesis; L-histidine biosynthesis; L-histidine from 5-phospho-alpha-D-ribose 1-diphosphate: step 5/9. IGPS catalyzes the conversion of PRFAR and glutamine to IGP, AICAR and glutamate. The HisF subunit catalyzes the cyclization activity that produces IGP and AICAR from PRFAR using the ammonia provided by the HisH subunit. The sequence is that of Imidazole glycerol phosphate synthase subunit HisF from Mycolicibacterium paratuberculosis (strain ATCC BAA-968 / K-10) (Mycobacterium paratuberculosis).